Reading from the N-terminus, the 348-residue chain is Alcohol dehydrogenase 1 (348 aa).

Residues Cys44, His67, Cys98, Cys101, Cys104, Cys112, and Cys154 each coordinate Zn(2+). NAD(+) contacts are provided by residues 178 to 184, Asp202, Lys207, 269 to 271, and Arg341; these read GAGGGLG and VGL.

The protein belongs to the zinc-containing alcohol dehydrogenase family. In terms of assembly, homotetramer. It depends on Zn(2+) as a cofactor.

The protein localises to the cytoplasm. It catalyses the reaction a primary alcohol + NAD(+) = an aldehyde + NADH + H(+). The catalysed reaction is a secondary alcohol + NAD(+) = a ketone + NADH + H(+). In terms of biological role, converts ethanol to acetaldehyde and plays a major role in xylose fermentation. The protein is Alcohol dehydrogenase 1 (ADH1) of Scheffersomyces stipitis (strain ATCC 58785 / CBS 6054 / NBRC 10063 / NRRL Y-11545) (Yeast).